The primary structure comprises 578 residues: MTQWDLKTVLSLPQYPGEFLHPVVYACTAVMLLCLLASVITYILHQSAIRISRKGRHALLNFCFHAALTFTVFAGGINRTQHPILCQAVGIALHYSTLSTMLWIGVTARNIYKQVTKKALPCPGADQPPYPKQPLLRFYLISGGVPFIICGVTAATNIRNYGTEDEDVAYCWMAWEPSLGAFYGPAAFIALVTCVYFLCTYVQLRRHPERRYELRERTEEQQRLAVPESGHRHGVRPGTPPTCDALAASQLQNEHSFKAQLRAAAFTLFLFTATWTFGALAVSQGHFLDMIFSCLYGAFCVTLGLFVLIHHCAKREDVWQCWWSCCPSRGDTSTTKPGAHPTLDANGDALGHTACLQDSPCPGKLRGFGHPPASHCKMTNLQAAQGHVSCLSPATPCCAKMHCEQLMEEEAAHIHMAEEDVYPHDPHLHDPHLHRCLKGRTKSHYFSRHQAAAAEREYAYHIPSSLDGSPHSSRSESPTSSLEGPMGMHTLACCAQADPFPMVSQPEGGDTSPGLYGCPPHLSPGPAHLEMLRRTQSLPFGGPSQNGLLQGDVREGLPFGTDGTGNIRTGPWKNETTV.

Residues 1-22 (MTQWDLKTVLSLPQYPGEFLHP) lie on the Extracellular side of the membrane. The helical transmembrane segment at 23–43 (VVYACTAVMLLCLLASVITYI) threads the bilayer. Residues 44–56 (LHQSAIRISRKGR) are Cytoplasmic-facing. The helical transmembrane segment at 57–77 (HALLNFCFHAALTFTVFAGGI) threads the bilayer. Residues 78–87 (NRTQHPILCQ) are Extracellular-facing. Residues 88–108 (AVGIALHYSTLSTMLWIGVTA) form a helical membrane-spanning segment. Residues 109-137 (RNIYKQVTKKALPCPGADQPPYPKQPLLR) are Cytoplasmic-facing. Residues 138 to 158 (FYLISGGVPFIICGVTAATNI) traverse the membrane as a helical segment. Residues 159-178 (RNYGTEDEDVAYCWMAWEPS) are Extracellular-facing. Residues 179 to 199 (LGAFYGPAAFIALVTCVYFLC) traverse the membrane as a helical segment. Topologically, residues 200-262 (TYVQLRRHPE…NEHSFKAQLR (63 aa)) are cytoplasmic. Positions 216–236 (ERTEEQQRLAVPESGHRHGVR) are disordered. Residues 263–283 (AAAFTLFLFTATWTFGALAVS) form a helical membrane-spanning segment. At 284 to 289 (QGHFLD) the chain is on the extracellular side. The chain crosses the membrane as a helical span at residues 290 to 310 (MIFSCLYGAFCVTLGLFVLIH). Disordered stretches follow at residues 463 to 486 (PSSL…EGPM) and 537 to 578 (SLPF…ETTV). A compositionally biased stretch (low complexity) spans 469-481 (SPHSSRSESPTSS). Polar residues predominate over residues 537–548 (SLPFGGPSQNGL).

Belongs to the G-protein coupled receptor 2 family. Adhesion G-protein coupled receptor (ADGR) subfamily. In terms of tissue distribution, predominantly expressed in CNS.

It is found in the membrane. In Mus musculus (Mouse), this protein is Adhesion G protein-coupled receptor A1.